The following is a 265-amino-acid chain: Zwei Ig domain protein zig-1 (265 aa).

An N-terminal signal peptide occupies residues 1-17 (MKNLLLITFFVVSTVTA). The Extracellular portion of the chain corresponds to 18-232 (LGGRGSKSAL…KMVDVRSEFQ (215 aa)). 2 Ig-like C2-type domains span residues 41-108 (HATD…TPHG) and 120-220 (PVVH…MLLV). N-linked (GlcNAc...) asparagine glycosylation is found at Asn83 and Asn193. Cys155 and Cys202 form a disulfide bridge. The helical transmembrane segment at 233 to 253 (WVYPLAVILITIFLLVVIIVF) threads the bilayer. Residues 254 to 265 (CEWRNKKSTSKA) are Cytoplasmic-facing.

Expressed in neurons and body wall muscles.

Its subcellular location is the cell membrane. Probably not involved in maintaining the position of ASI and ASH head neuron cell bodies and ventral nerve cord axons of PVQ, PVP, RMEV, AVK and HSN neurons. The protein is Zwei Ig domain protein zig-1 of Caenorhabditis elegans.